The following is a 475-amino-acid chain: Ribulose bisphosphate carboxylase large chain (475 aa).

The propeptide occupies 1–2; sequence MS. Position 3 is an N-acetylproline (Pro-3). Lys-14 bears the N6,N6,N6-trimethyllysine mark. The substrate site is built by Asn-123 and Thr-173. Lys-175 (proton acceptor) is an active-site residue. Lys-177 lines the substrate pocket. Lys-201, Asp-203, and Glu-204 together coordinate Mg(2+). Lys-201 bears the N6-carboxylysine mark. His-294 serves as the catalytic Proton acceptor. The substrate site is built by Arg-295, His-327, and Ser-379.

The protein belongs to the RuBisCO large chain family. Type I subfamily. Heterohexadecamer of 8 large chains and 8 small chains; disulfide-linked. The disulfide link is formed within the large subunit homodimers. It depends on Mg(2+) as a cofactor. The disulfide bond which can form in the large chain dimeric partners within the hexadecamer appears to be associated with oxidative stress and protein turnover.

The protein resides in the plastid. It is found in the chloroplast. The enzyme catalyses 2 (2R)-3-phosphoglycerate + 2 H(+) = D-ribulose 1,5-bisphosphate + CO2 + H2O. It catalyses the reaction D-ribulose 1,5-bisphosphate + O2 = 2-phosphoglycolate + (2R)-3-phosphoglycerate + 2 H(+). Its function is as follows. RuBisCO catalyzes two reactions: the carboxylation of D-ribulose 1,5-bisphosphate, the primary event in carbon dioxide fixation, as well as the oxidative fragmentation of the pentose substrate in the photorespiration process. Both reactions occur simultaneously and in competition at the same active site. The sequence is that of Ribulose bisphosphate carboxylase large chain from Pinus koraiensis (Korean pine).